The sequence spans 227 residues: Acyl-protein thioesterase 1 (227 aa).

Residues S119, D173, and H207 each act as charge relay system in the active site.

Belongs to the AB hydrolase superfamily. AB hydrolase 2 family.

Its subcellular location is the cytoplasm. The protein localises to the nucleus. It catalyses the reaction S-hexadecanoyl-L-cysteinyl-[protein] + H2O = L-cysteinyl-[protein] + hexadecanoate + H(+). Its function is as follows. Hydrolyzes fatty acids from S-acylated cysteine residues in proteins with a strong preference for palmitoylated G-alpha proteins over other acyl substrates. Mediates the deacylation of G-alpha proteins such as GPA1 in vivo, but has weak or no activity toward palmitoylated Ras proteins. Has weak lysophospholipase activity in vitro; however such activity may not exist in vivo. The protein is Acyl-protein thioesterase 1 of Yarrowia lipolytica (strain CLIB 122 / E 150) (Yeast).